The primary structure comprises 262 residues: Small ribosomal subunit protein uS3 (262 aa).

The region spanning 38–106 (LRKIIAKELE…KVKLNIQEIH (69 aa)) is the KH type-2 domain. The disordered stretch occupies residues 211 to 262 (KGQTQLPQPAVAAARPGLTVEEEERPQRKGGRGGRGANAGAARGGRGGRSRS). Residues 243 to 255 (GGRGANAGAARGG) are compositionally biased toward gly residues.

The protein belongs to the universal ribosomal protein uS3 family. In terms of assembly, part of the 30S ribosomal subunit. Forms a tight complex with proteins S10 and S14.

Its function is as follows. Binds the lower part of the 30S subunit head. Binds mRNA in the 70S ribosome, positioning it for translation. The polypeptide is Small ribosomal subunit protein uS3 (Roseiflexus sp. (strain RS-1)).